The following is a 440-amino-acid chain: Nitrilase and fragile histidine triad fusion protein NitFhit (440 aa).

The 251-residue stretch at Arg14–Leu264 folds into the CN hydrolase domain. Active-site residues include Glu54, Lys127, and Cys169. One can recognise an HIT domain in the interval Gly297–Asp405. Positions His390–His394 match the Histidine triad motif motif. His392 serves as the catalytic Tele-AMP-histidine intermediate.

In the N-terminal section; belongs to the UPF0012 family. In terms of assembly, homotetramer. Requires Mn(2+) as cofactor.

It carries out the reaction P(1),P(3)-bis(5'-adenosyl) triphosphate + H2O = AMP + ADP + 2 H(+). In terms of biological role, cleaves A-5'-PPP-5'A to yield AMP and ADP. The sequence is that of Nitrilase and fragile histidine triad fusion protein NitFhit from Caenorhabditis elegans.